A 128-amino-acid chain; its full sequence is MDGGLCFDSWSDYLGLSSLISRGLQPQREGERPRWDVLSPASAEPLPSNESVGHKGCGFCRSNREALSLYTSHRLRALDGRVLCPVLRGYTCPLCGANGDWAHTMRYCPLRRLLRDPQSNSNNPKLRH.

Residues 7-23 (FDSWSDYLGLSSLISRG) are essential for its translational repressor activity. The segment at 25 to 52 (QPQREGERPRWDVLSPASAEPLPSNESV) is disordered. The Nanos-type zinc-finger motif lies at 56–110 (GCGFCRSNREALSLYTSHRLRALDGRVLCPVLRGYTCPLCGANGDWAHTMRYCPL). Cys57, Cys60, His73, Cys84, Cys92, Cys95, His103, and Cys108 together coordinate Zn(2+). 2 short sequence motifs (C2HC) span residues 57-84 (CGFC…RVLC) and 92-108 (CPLC…MRYC).

Belongs to the nanos family. In terms of assembly, interacts with ccnb1. In terms of tissue distribution, ovary and testis.

The protein localises to the cytoplasm. Its subcellular location is the perinuclear region. Functionally, acts as a translational repressor. Can mediate repression affecting different steps in the translation process: cap-driven, IRES-driven, polyadenylated RNAs or nonpolyadenylated RNAs. Essential for the development of primordial germ cells (PGCs) by ensuring their proper migration and survival. The polypeptide is Nanos homolog 1 (nanos1) (Xenopus laevis (African clawed frog)).